Reading from the N-terminus, the 159-residue chain is Phosphopantetheine adenylyltransferase (159 aa).

Thr10 serves as a coordination point for substrate. ATP contacts are provided by residues 10-11 and His18; that span reads TF. Lys42, Met74, and Arg88 together coordinate substrate. Residues 89-91, Glu99, and 124-130 each bind ATP; these read GLR and WSFISSS.

This sequence belongs to the bacterial CoaD family. As to quaternary structure, homohexamer. Mg(2+) is required as a cofactor.

The protein resides in the cytoplasm. The enzyme catalyses (R)-4'-phosphopantetheine + ATP + H(+) = 3'-dephospho-CoA + diphosphate. The protein operates within cofactor biosynthesis; coenzyme A biosynthesis; CoA from (R)-pantothenate: step 4/5. In terms of biological role, reversibly transfers an adenylyl group from ATP to 4'-phosphopantetheine, yielding dephospho-CoA (dPCoA) and pyrophosphate. This is Phosphopantetheine adenylyltransferase from Escherichia fergusonii (strain ATCC 35469 / DSM 13698 / CCUG 18766 / IAM 14443 / JCM 21226 / LMG 7866 / NBRC 102419 / NCTC 12128 / CDC 0568-73).